We begin with the raw amino-acid sequence, 396 residues long: NADH-quinone oxidoreductase subunit D (396 aa).

It belongs to the complex I 49 kDa subunit family. As to quaternary structure, NDH-1 is composed of 14 different subunits. Subunits NuoB, C, D, E, F, and G constitute the peripheral sector of the complex.

Its subcellular location is the cell inner membrane. The enzyme catalyses a quinone + NADH + 5 H(+)(in) = a quinol + NAD(+) + 4 H(+)(out). In terms of biological role, NDH-1 shuttles electrons from NADH, via FMN and iron-sulfur (Fe-S) centers, to quinones in the respiratory chain. The immediate electron acceptor for the enzyme in this species is believed to be ubiquinone. Couples the redox reaction to proton translocation (for every two electrons transferred, four hydrogen ions are translocated across the cytoplasmic membrane), and thus conserves the redox energy in a proton gradient. The polypeptide is NADH-quinone oxidoreductase subunit D (Bartonella tribocorum (strain CIP 105476 / IBS 506)).